We begin with the raw amino-acid sequence, 224 residues long: Holliday junction branch migration complex subunit RuvA (224 aa).

Residues 1–64 (MIGKVAGILD…EDLLQLFGFP (64 aa)) are domain I. The interval 65 to 143 (TMIEKEWHRL…ALMAMGGGTA (79 aa)) is domain II. The disordered stretch occupies residues 141 to 185 (GTAALAPSEPPEPQPGTSSGSRRKTRAPEPPRPSHTADALSALAN). The tract at residues 144 to 170 (ALAPSEPPEPQPGTSSGSRRKTRAPEP) is flexible linker. Positions 171 to 224 (PRPSHTADALSALANLGYQPTDAAQAVAQAAGESPDADTAALIRAALKLLAPKS) are domain III.

It belongs to the RuvA family. In terms of assembly, homotetramer. Forms an RuvA(8)-RuvB(12)-Holliday junction (HJ) complex. HJ DNA is sandwiched between 2 RuvA tetramers; dsDNA enters through RuvA and exits via RuvB. An RuvB hexamer assembles on each DNA strand where it exits the tetramer. Each RuvB hexamer is contacted by two RuvA subunits (via domain III) on 2 adjacent RuvB subunits; this complex drives branch migration. In the full resolvosome a probable DNA-RuvA(4)-RuvB(12)-RuvC(2) complex forms which resolves the HJ.

Its subcellular location is the cytoplasm. Functionally, the RuvA-RuvB-RuvC complex processes Holliday junction (HJ) DNA during genetic recombination and DNA repair, while the RuvA-RuvB complex plays an important role in the rescue of blocked DNA replication forks via replication fork reversal (RFR). RuvA specifically binds to HJ cruciform DNA, conferring on it an open structure. The RuvB hexamer acts as an ATP-dependent pump, pulling dsDNA into and through the RuvAB complex. HJ branch migration allows RuvC to scan DNA until it finds its consensus sequence, where it cleaves and resolves the cruciform DNA. The polypeptide is Holliday junction branch migration complex subunit RuvA (Cereibacter sphaeroides (strain KD131 / KCTC 12085) (Rhodobacter sphaeroides)).